Consider the following 357-residue polypeptide: Prostaglandin E2 receptor EP2 subtype (357 aa).

Residues 1 to 24 (MDNSFNDSRRVENCESRQYLLSDE) lie on the Extracellular side of the membrane. An N-linked (GlcNAc...) asparagine glycan is attached at N6. A helical membrane pass occupies residues 25–48 (SPAISSVMFTAGVLGNLIALALLA). At 49 to 66 (RRWRGDTGCSAGSRTSIS) the chain is on the cytoplasmic side. The chain crosses the membrane as a helical span at residues 67 to 92 (LFHVLVTELVLTDLLGTCLISPVVLA). The Extracellular portion of the chain corresponds to 93–112 (SYSRNQTLVALAPESRACTY). A disulfide bridge links C110 with C188. Residues 113 to 133 (FAFTMTFFSLATMLMLFAMAL) form a helical membrane-spanning segment. Over 134-152 (ERYLAIGHPYFYRRRVSRR) the chain is Cytoplasmic. A helical membrane pass occupies residues 153-177 (GGLAVLPAIYGVSLLFCSLPLLNYG). Residues 178–199 (EYVQYCPGTWCFIQHGRTAYLQ) lie on the Extracellular side of the membrane. The chain crosses the membrane as a helical span at residues 200–224 (LYATVLLLLIVAVLGCNISVILNLI). Over 225-262 (RMQLRSKRSRCGLSGSSLRGPGSRRRGERTSMAEETDH) the chain is Cytoplasmic. Residues 235–245 (CGLSGSSLRGP) show a composition bias toward low complexity. The disordered stretch occupies residues 235 to 255 (CGLSGSSLRGPGSRRRGERTS). The helical transmembrane segment at 263-286 (LILLAIMTITFAVCSLPFTIFAYM) threads the bilayer. Over 287-299 (DETSSRKEKWDLR) the chain is Extracellular. Residues 300-323 (ALRFLSVNSIIDPWVFVILRPPVL) form a helical membrane-spanning segment. Topologically, residues 324-357 (RLMRSVLCCRTSLRAPEAPGASCSTQQTDLCGQL) are cytoplasmic.

Belongs to the G-protein coupled receptor 1 family.

The protein localises to the cell membrane. Its function is as follows. Receptor for prostaglandin E2 (PGE2). The activity of this receptor is mediated by G(s) proteins that stimulate adenylate cyclase. The subsequent raise in intracellular cAMP is responsible for the relaxing effect of this receptor on smooth muscle. This chain is Prostaglandin E2 receptor EP2 subtype (Ptger2), found in Rattus norvegicus (Rat).